The sequence spans 60 residues: Small, acid-soluble spore protein H (60 aa).

This sequence belongs to the SspH family.

Its subcellular location is the spore core. The chain is Small, acid-soluble spore protein H from Bacillus velezensis (strain DSM 23117 / BGSC 10A6 / LMG 26770 / FZB42) (Bacillus amyloliquefaciens subsp. plantarum).